Reading from the N-terminus, the 385-residue chain is 8-amino-7-oxononanoate synthase (385 aa).

Substrate is bound at residue Arg-21. Residue 108–109 coordinates pyridoxal 5'-phosphate; it reads GF. His-133 is a binding site for substrate. The pyridoxal 5'-phosphate site is built by Ser-179, His-207, and Thr-233. Position 236 is an N6-(pyridoxal phosphate)lysine (Lys-236). Thr-352 serves as a coordination point for substrate.

This sequence belongs to the class-II pyridoxal-phosphate-dependent aminotransferase family. BioF subfamily. In terms of assembly, homodimer. The cofactor is pyridoxal 5'-phosphate.

The enzyme catalyses 6-carboxyhexanoyl-[ACP] + L-alanine + H(+) = (8S)-8-amino-7-oxononanoate + holo-[ACP] + CO2. It participates in cofactor biosynthesis; biotin biosynthesis. Its function is as follows. Catalyzes the decarboxylative condensation of pimeloyl-[acyl-carrier protein] and L-alanine to produce 8-amino-7-oxononanoate (AON), [acyl-carrier protein], and carbon dioxide. In Salmonella enteritidis PT4 (strain P125109), this protein is 8-amino-7-oxononanoate synthase.